The following is a 590-amino-acid chain: Synaptotagmin-3 (590 aa).

The Vesicular portion of the chain corresponds to 1–54 (MSGDYEDDLCRRALILVSDLCARVRDADTNDRCQEFNDRIRGYPRGPDADISVS). Residues 10–34 (CRRALILVSDLCARVRDADTNDRCQ) form a cysteine motif region. The chain crosses the membrane as a helical span at residues 55–75 (LLSVIVTFCGIVLLGVSLFVS). Residues 76-590 (WKLCWVPWRD…KGLSEKENSE (515 aa)) are Cytoplasmic-facing. 3 disordered regions span residues 143-220 (AELL…VTSL), 234-260 (TQQTLTSQPDPSSEERPPALPLPLPGG), and 273-295 (ELYQGTGPGGRRSGGGPGSGEAG). The span at 185-203 (SPELPSEGGAGSGLLLLPP) shows a compositional bias: low complexity. Residues 234–243 (TQQTLTSQPD) are compositionally biased toward polar residues. Positions 278-295 (TGPGGRRSGGGPGSGEAG) are enriched in gly residues. R284 is subject to Omega-N-methylarginine. 2 consecutive C2 domains span residues 299–420 (PCGR…PLWR) and 431–565 (DLGE…EHWH). 11 residues coordinate Ca(2+): D330, D336, D388, F389, D390, S393, D396, D462, D468, D522, and D524.

The protein belongs to the synaptotagmin family. As to quaternary structure, homodimer; disulfide-linked via the cysteine motif. Can also form heterodimers with SYT6, SYT9 and SYT10. Ca(2+) serves as cofactor. In terms of tissue distribution, expressed in melanocytes.

It is found in the cell membrane. The protein localises to the cytoplasmic vesicle. Its subcellular location is the secretory vesicle membrane. In terms of biological role, ca(2+) sensor involved in Ca(2+)-dependent exocytosis of secretory vesicles through Ca(2+) and phospholipid binding to the C2 domain. Ca(2+) induces binding of the C2-domains to phospholipid membranes and to assembled SNARE-complexes; both actions contribute to triggering exocytosis. Plays a role in dendrite formation by melanocytes. This is Synaptotagmin-3 (SYT3) from Homo sapiens (Human).